The sequence spans 544 residues: Chaperonin GroEL 4 (544 aa).

ATP is bound by residues 30 to 33 (TLGP), K51, 87 to 91 (DGTTT), G415, and D496.

The protein belongs to the chaperonin (HSP60) family. As to quaternary structure, forms a cylinder of 14 subunits composed of two heptameric rings stacked back-to-back. Interacts with the co-chaperonin GroES.

Its subcellular location is the cytoplasm. It catalyses the reaction ATP + H2O + a folded polypeptide = ADP + phosphate + an unfolded polypeptide.. Functionally, together with its co-chaperonin GroES, plays an essential role in assisting protein folding. The GroEL-GroES system forms a nano-cage that allows encapsulation of the non-native substrate proteins and provides a physical environment optimized to promote and accelerate protein folding. This chain is Chaperonin GroEL 4, found in Sinorhizobium medicae (strain WSM419) (Ensifer medicae).